A 293-amino-acid chain; its full sequence is Aspartate carbamoyltransferase catalytic subunit (293 aa).

Residues Arg50 and Thr51 each contribute to the carbamoyl phosphate site. Lys78 serves as a coordination point for L-aspartate. Positions 100, 127, and 130 each coordinate carbamoyl phosphate. Positions 160 and 210 each coordinate L-aspartate. Carbamoyl phosphate contacts are provided by Ala253 and Pro254.

The protein belongs to the aspartate/ornithine carbamoyltransferase superfamily. ATCase family. As to quaternary structure, heterododecamer (2C3:3R2) of six catalytic PyrB chains organized as two trimers (C3), and six regulatory PyrI chains organized as three dimers (R2).

The catalysed reaction is carbamoyl phosphate + L-aspartate = N-carbamoyl-L-aspartate + phosphate + H(+). It participates in pyrimidine metabolism; UMP biosynthesis via de novo pathway; (S)-dihydroorotate from bicarbonate: step 2/3. Functionally, catalyzes the condensation of carbamoyl phosphate and aspartate to form carbamoyl aspartate and inorganic phosphate, the committed step in the de novo pyrimidine nucleotide biosynthesis pathway. The chain is Aspartate carbamoyltransferase catalytic subunit from Staphylococcus aureus (strain USA300).